The sequence spans 664 residues: Putative carboxypeptidase suro-1 (664 aa).

Residues 1 to 23 (MRYLCKSILLAVHTILLVGSVCC) form the signal peptide. A propeptide spans 24-110 (STDVHNTDDK…MSVPDVEKLI (87 aa)) (activation peptide). Positions 160-473 (DYASYADMVK…EGFREVVDAV (314 aa)) constitute a Peptidase M14 domain. Histidine 219 and glutamate 222 together coordinate Zn(2+). Substrate is bound by residues 219 to 222 (HARE), arginine 281, and 306 to 307 (NR). Histidine 361 is a binding site for Zn(2+). 362–363 (SY) lines the substrate pocket. Glutamate 437 (proton donor/acceptor) is an active-site residue. Positions 512-543 (ASQAAGSTTRSTTTLKTSTTSVSTTSEATSPS) are enriched in low complexity. The tract at residues 512 to 590 (ASQAAGSTTR…TTTTEEEDVT (79 aa)) is disordered. Positions 564-573 (PTPPMAPPIM) are enriched in pro residues. Residues 574-583 (SPSTEFSTTT) are compositionally biased toward low complexity. One can recognise a ShKT domain in the interval 621 to 657 (CRDMRYSCGFWLKNNKQVCEEQQSFMRAQCAYTCKFC). 3 disulfide bridges follow: cysteine 621–cysteine 657, cysteine 628–cysteine 650, and cysteine 639–cysteine 654.

Belongs to the peptidase M14 family. It depends on Zn(2+) as a cofactor. As to expression, localizes in stripes along the cuticle.

The protein localises to the cytoplasmic vesicle. The protein resides in the secreted. May play a role in processing or organization of cuticle collagen proteins, including rol-6 and col-19. This is Putative carboxypeptidase suro-1 from Caenorhabditis elegans.